A 276-amino-acid chain; its full sequence is Undecaprenyl-diphosphatase 2 (276 aa).

The next 8 helical transmembrane spans lie at 1–21 (MSLWFLVFLSVLQGVTELFPV), 44–64 (QLLPFLVALHLGTALALLWYF), 87–107 (GHLMWALIIGTIPTGIVGLLL), 114–134 (VFHDLRIVAVALIINGVLLWV), 150–170 (MTFKQAFFVGLAQIGALIPGF), 190–210 (AAEFSFLLGTPIIFAAGVLEL), 220–240 (LMDALLGGVLTAIAAYLSVRF), and 251–271 (LASFGVYCVIAGVFFLGWFML).

Belongs to the UppP family.

It is found in the cell inner membrane. It carries out the reaction di-trans,octa-cis-undecaprenyl diphosphate + H2O = di-trans,octa-cis-undecaprenyl phosphate + phosphate + H(+). Functionally, catalyzes the dephosphorylation of undecaprenyl diphosphate (UPP). Confers resistance to bacitracin. In Burkholderia ambifaria (strain ATCC BAA-244 / DSM 16087 / CCUG 44356 / LMG 19182 / AMMD) (Burkholderia cepacia (strain AMMD)), this protein is Undecaprenyl-diphosphatase 2.